A 326-amino-acid polypeptide reads, in one-letter code: GTP 3',8-cyclase (326 aa).

The 226-residue stretch at 7 to 232 (GFGRSFPYLR…PRAADAGPAR (226 aa)) folds into the Radical SAM core domain. Arg16 is a GTP binding site. Positions 23 and 27 each coordinate [4Fe-4S] cluster. Position 29 (Tyr29) interacts with S-adenosyl-L-methionine. Cys30 provides a ligand contact to [4Fe-4S] cluster. Arg65 is a binding site for GTP. S-adenosyl-L-methionine is bound at residue Gly69. Thr96 provides a ligand contact to GTP. Residue Ser120 coordinates S-adenosyl-L-methionine. Lys157 lines the GTP pocket. Residue Met191 coordinates S-adenosyl-L-methionine. [4Fe-4S] cluster-binding residues include Cys254 and Cys257. 259–261 (RLR) is a GTP binding site. Residue Cys271 coordinates [4Fe-4S] cluster.

It belongs to the radical SAM superfamily. MoaA family. In terms of assembly, monomer and homodimer. Requires [4Fe-4S] cluster as cofactor.

The catalysed reaction is GTP + AH2 + S-adenosyl-L-methionine = (8S)-3',8-cyclo-7,8-dihydroguanosine 5'-triphosphate + 5'-deoxyadenosine + L-methionine + A + H(+). It functions in the pathway cofactor biosynthesis; molybdopterin biosynthesis. Functionally, catalyzes the cyclization of GTP to (8S)-3',8-cyclo-7,8-dihydroguanosine 5'-triphosphate. The chain is GTP 3',8-cyclase from Stenotrophomonas maltophilia (strain K279a).